The primary structure comprises 143 residues: MTQSIIAFDIGSKTIGLAYSSGVIASSLDTIRFEEYNFDQGLKQLELYLKKYNPSIIVVGYPKNMNNTIGERAEMVDYVIEMFLDMYKSFNKDQIIKVDERRTTKIAKNILIQANLTREKQKKYKDSLAAQLILELYLESRKL.

The protein belongs to the YqgF nuclease family.

The protein resides in the cytoplasm. In terms of biological role, could be a nuclease involved in processing of the 5'-end of pre-16S rRNA. The chain is Putative pre-16S rRNA nuclease from Mycoplasma capricolum subsp. capricolum (strain California kid / ATCC 27343 / NCTC 10154).